A 185-amino-acid polypeptide reads, in one-letter code: Elongation factor P 1 (185 aa).

This sequence belongs to the elongation factor P family.

The protein resides in the cytoplasm. It participates in protein biosynthesis; polypeptide chain elongation. In terms of biological role, involved in peptide bond synthesis. Stimulates efficient translation and peptide-bond synthesis on native or reconstituted 70S ribosomes in vitro. Probably functions indirectly by altering the affinity of the ribosome for aminoacyl-tRNA, thus increasing their reactivity as acceptors for peptidyl transferase. The chain is Elongation factor P 1 (efp1) from Chlamydia trachomatis serovar D (strain ATCC VR-885 / DSM 19411 / UW-3/Cx).